A 449-amino-acid chain; its full sequence is Glucose-6-phosphate isomerase (449 aa).

Glu291 serves as the catalytic Proton donor. Residues His312 and Lys426 contribute to the active site.

Belongs to the GPI family.

Its subcellular location is the cytoplasm. The catalysed reaction is alpha-D-glucose 6-phosphate = beta-D-fructose 6-phosphate. It functions in the pathway carbohydrate biosynthesis; gluconeogenesis. The protein operates within carbohydrate degradation; glycolysis; D-glyceraldehyde 3-phosphate and glycerone phosphate from D-glucose: step 2/4. Its function is as follows. Catalyzes the reversible isomerization of glucose-6-phosphate to fructose-6-phosphate. In Streptococcus pneumoniae serotype 19F (strain G54), this protein is Glucose-6-phosphate isomerase.